A 261-amino-acid chain; its full sequence is Small ribosomal subunit protein uS2 (261 aa).

Belongs to the universal ribosomal protein uS2 family.

The protein is Small ribosomal subunit protein uS2 of Streptococcus mutans serotype c (strain ATCC 700610 / UA159).